We begin with the raw amino-acid sequence, 195 residues long: Probable nicotinate-nucleotide adenylyltransferase (195 aa).

This sequence belongs to the NadD family.

It catalyses the reaction nicotinate beta-D-ribonucleotide + ATP + H(+) = deamido-NAD(+) + diphosphate. The protein operates within cofactor biosynthesis; NAD(+) biosynthesis; deamido-NAD(+) from nicotinate D-ribonucleotide: step 1/1. In terms of biological role, catalyzes the reversible adenylation of nicotinate mononucleotide (NaMN) to nicotinic acid adenine dinucleotide (NaAD). This is Probable nicotinate-nucleotide adenylyltransferase from Dictyoglomus thermophilum (strain ATCC 35947 / DSM 3960 / H-6-12).